The primary structure comprises 341 residues: ATP synthase subunit a 2 (341 aa).

The first 33 residues, 1 to 33 (MKRVKVIQIKGFFRVMALLAPLLLNAYLPVQAS), serve as a signal peptide directing secretion. 6 helical membrane passes run 112–132 (VVML…VGAA), 173–193 (LPYL…GLIP), 195–215 (GATA…TFFI), 242–262 (WIIM…ALTV), 273–293 (IVIL…VAAA), and 307–327 (IFVA…FIGL).

This sequence belongs to the ATPase A chain family. In terms of assembly, F-type ATPases have 2 components, CF(1) - the catalytic core - and CF(0) - the membrane proton channel. CF(1) has five subunits: alpha(3), beta(3), gamma(1), delta(1), epsilon(1). CF(0) has four main subunits: a, b, b' and c.

It localises to the cell inner membrane. Its function is as follows. Key component of the proton channel; it plays a direct role in the translocation of protons across the membrane. This Chlorobium luteolum (strain DSM 273 / BCRC 81028 / 2530) (Pelodictyon luteolum) protein is ATP synthase subunit a 2.